Reading from the N-terminus, the 548-residue chain is Probable malate:quinone oxidoreductase (548 aa).

The segment at 521 to 548 (DKPQAADSTPKPQLKPQPVQKEVADIAL) is disordered. Residues 530-541 (PKPQLKPQPVQK) are compositionally biased toward low complexity.

Belongs to the MQO family. Requires FAD as cofactor.

The catalysed reaction is (S)-malate + a quinone = a quinol + oxaloacetate. It participates in carbohydrate metabolism; tricarboxylic acid cycle; oxaloacetate from (S)-malate (quinone route): step 1/1. The chain is Probable malate:quinone oxidoreductase from Shigella sonnei (strain Ss046).